Here is a 530-residue protein sequence, read N- to C-terminus: Pentatricopeptide repeat-containing protein At5g56310 (530 aa).

PPR repeat units follow at residues 77 to 114 (NTYL…CAKP), 115 to 149 (DTFT…GFDS), 150 to 180 (SVHV…MLVK), 181 to 211 (DVNV…MPCW), 214 to 248 (NEVS…NVEP), 249 to 283 (DEVT…GMNR), 284 to 314 (AVSL…VNER), 315 to 349 (NVVT…GVRP), 350 to 380 (NDVT…MRSK), and 386 to 420 (NIEH…ANAA). The type E motif stretch occupies residues 421 to 496 (IWGSLLAASN…MAGESSIEVE (76 aa)). The interval 497–527 (NRVYKFISGDLTHPQVERIHEILQEMDLQIQ) is type E(+) motif.

Belongs to the PPR family. PCMP-E subfamily.

The polypeptide is Pentatricopeptide repeat-containing protein At5g56310 (PCMP-E13) (Arabidopsis thaliana (Mouse-ear cress)).